The chain runs to 517 residues: Crotonobetaine/carnitine--CoA ligase (517 aa).

The protein belongs to the ATP-dependent AMP-binding enzyme family.

The catalysed reaction is 4-(trimethylamino)butanoate + ATP + CoA = 4-(trimethylamino)butanoyl-CoA + AMP + diphosphate. The enzyme catalyses crotonobetaine + ATP + CoA = crotonobetainyl-CoA + AMP + diphosphate. It catalyses the reaction (R)-carnitine + ATP + CoA = (R)-carnitinyl-CoA + AMP + diphosphate. Its pathway is amine and polyamine metabolism; carnitine metabolism. Functionally, catalyzes the transfer of CoA to carnitine, generating the initial carnitinyl-CoA needed for the CaiB reaction cycle. Also has activity toward crotonobetaine and gamma-butyrobetaine. This is Crotonobetaine/carnitine--CoA ligase from Escherichia coli O17:K52:H18 (strain UMN026 / ExPEC).